The following is a 1020-amino-acid chain: Probable beta-galactosidase B (1020 aa).

The first 22 residues, 1–22, serve as a signal peptide directing secretion; that stretch reads MLISKTVLSGLALGASFVGVSA. N-linked (GlcNAc...) asparagine glycosylation is present at N25. Y90 serves as a coordination point for substrate. Residue N111 is glycosylated (N-linked (GlcNAc...) asparagine). Residues N135, A136, and E137 each coordinate substrate. An N-linked (GlcNAc...) asparagine glycan is attached at N172. N195 serves as a coordination point for substrate. Catalysis depends on E196, which acts as the Proton donor. N-linked (GlcNAc...) asparagine glycosylation is found at N210 and N251. Residue Y264 coordinates substrate. Residues C270 and C323 are joined by a disulfide bond. N271 is a glycosylation site (N-linked (GlcNAc...) asparagine). The active-site Nucleophile is E307. Y372 is a substrate binding site. Residues N410, N455, N549, N596, N625, N702, N747, N785, N819, N880, and N919 are each glycosylated (N-linked (GlcNAc...) asparagine).

The protein belongs to the glycosyl hydrolase 35 family.

It is found in the secreted. The enzyme catalyses Hydrolysis of terminal non-reducing beta-D-galactose residues in beta-D-galactosides.. In terms of biological role, cleaves beta-linked terminal galactosyl residues from gangliosides, glycoproteins, and glycosaminoglycans. This Aspergillus flavus (strain ATCC 200026 / FGSC A1120 / IAM 13836 / NRRL 3357 / JCM 12722 / SRRC 167) protein is Probable beta-galactosidase B (lacB).